Reading from the N-terminus, the 462-residue chain is MFASIKDILKNPILNSNVTINGWIRTKRSNGKIGFIEINDGSTLKGIQAVINEEENQFSEKDLKKLTTGTSISLTGLLVESPAKGQNYEIKTHSFNVIGETDPETYPLQKKRHSFEFLREIPHLRIRTNTFGAIARVRNKISYKIHEYFQKNGFFYINTPIITSNDGEGAGEMFRVSTLKFNKLNNALSNIDFKDDFFGKEAFLSVTGQLHGEAYAMALSKIYTFGPTFRAENSNTTRHASEFWMIEPEMAFYKLNDNIALAEDLLKYLLSSILNECSQDMDFLENYIEKGLIKKLENVINSNFEVITYTKAIEILENSKKNFEIKPYWGIDLQTDHERYLTEETFKKPVVVIDYPKNFKAFYMKANKDNKTVKGMDILVPKIGEIIGGSEREDDLQKLENRIKELNLNIEHLNWYLDLRRFGSAPHSGFGLGLERLVQYSTGISNIRDSIPFPRTPKNLYF.

It belongs to the class-II aminoacyl-tRNA synthetase family. Homodimer.

It is found in the cytoplasm. It carries out the reaction tRNA(Asn) + L-asparagine + ATP = L-asparaginyl-tRNA(Asn) + AMP + diphosphate + H(+). The sequence is that of Asparagine--tRNA ligase from Borreliella burgdorferi (strain ATCC 35210 / DSM 4680 / CIP 102532 / B31) (Borrelia burgdorferi).